A 212-amino-acid chain; its full sequence is Ion-translocating oxidoreductase complex subunit G (212 aa).

The chain crosses the membrane as a helical span at residues 9–29; it reads GLLLGLFALLCTGLVAIVNQL. Thr176 is modified (FMN phosphoryl threonine).

Belongs to the RnfG family. The complex is composed of six subunits: RnfA, RnfB, RnfC, RnfD, RnfE and RnfG. FMN serves as cofactor.

It localises to the cell inner membrane. Functionally, part of a membrane-bound complex that couples electron transfer with translocation of ions across the membrane. In Shewanella piezotolerans (strain WP3 / JCM 13877), this protein is Ion-translocating oxidoreductase complex subunit G.